The primary structure comprises 60 residues: Large ribosomal subunit protein uL30 (60 aa).

The protein belongs to the universal ribosomal protein uL30 family. As to quaternary structure, part of the 50S ribosomal subunit.

This Shewanella sp. (strain MR-7) protein is Large ribosomal subunit protein uL30.